The sequence spans 56 residues: Large ribosomal subunit protein bL33 (56 aa).

Belongs to the bacterial ribosomal protein bL33 family.

This Anaplasma marginale (strain Florida) protein is Large ribosomal subunit protein bL33.